We begin with the raw amino-acid sequence, 345 residues long: DNA-directed RNA polymerase subunit alpha (345 aa).

The alpha N-terminal domain (alpha-NTD) stretch occupies residues 1–241 (MLRDTHLALQ…DQLGMFINFE (241 aa)). Residues 257–345 (FNPNLLRKVD…ELVKRSDNPF (89 aa)) form an alpha C-terminal domain (alpha-CTD) region.

The protein belongs to the RNA polymerase alpha chain family. In terms of assembly, homodimer. The RNAP catalytic core consists of 2 alpha, 1 beta, 1 beta' and 1 omega subunit. When a sigma factor is associated with the core the holoenzyme is formed, which can initiate transcription.

It catalyses the reaction RNA(n) + a ribonucleoside 5'-triphosphate = RNA(n+1) + diphosphate. Functionally, DNA-dependent RNA polymerase catalyzes the transcription of DNA into RNA using the four ribonucleoside triphosphates as substrates. The protein is DNA-directed RNA polymerase subunit alpha of Acidiphilium cryptum (strain JF-5).